Reading from the N-terminus, the 538-residue chain is Putative outer membrane porin BglH (538 aa).

Positions 1 to 25 (MFRRNLITSAILLMAPLAFSAQSLA) are cleaved as a signal peptide. Residues 52 to 82 (KDEEKKKYTPATVNRSVSTNDQGYAANPFPT) are disordered. Over residues 62–73 (ATVNRSVSTNDQ) the composition is skewed to polar residues.

This sequence belongs to the porin LamB (TC 1.B.3) family.

It localises to the cell outer membrane. May be a sugar porin with a broad carbohydrate specificity. This is Putative outer membrane porin BglH (bglH) from Escherichia coli O139:H28 (strain E24377A / ETEC).